We begin with the raw amino-acid sequence, 48 residues long: U1-theraphotoxin-Agm1a (48 aa).

Cystine bridges form between Cys4–Cys34, Cys8–Cys40, and Cys22–Cys45. At Met44 the chain carries Methionine sulfoxide; partial.

The protein belongs to the neurotoxin 12 (Hwtx-2) family. 01 (Ap1a) subfamily. As to expression, expressed by the venom gland.

It localises to the secreted. Functionally, is toxic to both insects and mammals. Induces reversible paralysis when injected into S.frugiperda larvae. Reduces both the amplitude and frequency of responses from muscle (GF-TTM and GF-DLM) pathways in the D.melanogaster giant fiber circuit, suggesting an action at the neuromuscular junction, which is mediated by glutamatergic receptors. In mice, intracranial injection of 30 ug causes increased urination, myoclonus, hypermotility with circular movements followed by respiratory and generalized seizures resulting in death within 25-35 minutes of injection. This Acanthoscurria gomesiana (Tarantula spider) protein is U1-theraphotoxin-Agm1a.